We begin with the raw amino-acid sequence, 361 residues long: MAGNSIGQHFRVTTFGESHGLALGCIVDGCPPGLELTEADLQVDLDRRKPGTSKYTTQRREADEVKILSGVFEGKTTGTSIGLLIENTDQRSKDYSEIKDKFRPGHADYTYHQKYGQRDYRGGGRSSARETAMRVAAGAVAKKYLKQEFGIEIRAYLSQMGDVSIDSVDWNEIENNAFFCPDASKVDAFDELIRKLKKEGDSIGAKITVVAQGVPVGLGEPVFDRLDADVAHALMGINAVKGVEIGDGFEVVNQRGSEHRDPLTPEGFSSNHAGGILGGISSGQDIVAHIALKPTSSITVPGETITRSGEKTELITKGRHDPCVGIRAVPIAEAMLAIVVMDHLVRHRGQNFGVQTETPKI.

Arg-48 lines the NADP(+) pocket. FMN contacts are provided by residues 125–127 (RSS), 238–239 (NA), Gly-278, 293–297 (KPTSS), and Arg-319.

It belongs to the chorismate synthase family. Homotetramer. FMNH2 is required as a cofactor.

It catalyses the reaction 5-O-(1-carboxyvinyl)-3-phosphoshikimate = chorismate + phosphate. The protein operates within metabolic intermediate biosynthesis; chorismate biosynthesis; chorismate from D-erythrose 4-phosphate and phosphoenolpyruvate: step 7/7. In terms of biological role, catalyzes the anti-1,4-elimination of the C-3 phosphate and the C-6 proR hydrogen from 5-enolpyruvylshikimate-3-phosphate (EPSP) to yield chorismate, which is the branch point compound that serves as the starting substrate for the three terminal pathways of aromatic amino acid biosynthesis. This reaction introduces a second double bond into the aromatic ring system. This is Chorismate synthase from Aliivibrio fischeri (strain ATCC 700601 / ES114) (Vibrio fischeri).